A 252-amino-acid polypeptide reads, in one-letter code: Flagellar L-ring protein (252 aa).

The first 25 residues, 1-25 (MSKSVPLQRIVLVAALMATGGLAGG), serve as a signal peptide directing secretion. Cysteine 26 is lipidated: N-palmitoyl cysteine. A lipid anchor (S-diacylglycerol cysteine) is attached at cysteine 26.

Belongs to the FlgH family. As to quaternary structure, the basal body constitutes a major portion of the flagellar organelle and consists of four rings (L,P,S, and M) mounted on a central rod.

The protein localises to the cell outer membrane. It is found in the bacterial flagellum basal body. Assembles around the rod to form the L-ring and probably protects the motor/basal body from shearing forces during rotation. The chain is Flagellar L-ring protein from Rhodopseudomonas palustris (strain ATCC BAA-98 / CGA009).